Here is a 310-residue protein sequence, read N- to C-terminus: Antiviral protein II/III (310 aa).

A signal peptide spans 1-25; the sequence is MKMKVLEVVGLAISIWLMLTPPASS. 2 cysteine pairs are disulfide-bonded: Cys57–Cys284 and Cys106–Cys123. The active site involves Tyr94. Catalysis depends on residues Tyr142, Glu197, and Arg200.

This sequence belongs to the ribosome-inactivating protein family. Type 1 RIP subfamily. PAP-II is expressed in early summer leaves (at protein level). PAP-III is expressed in late summer leaves (at protein level).

It carries out the reaction Endohydrolysis of the N-glycosidic bond at one specific adenosine on the 28S rRNA.. Possesses antiviral potency. Inhibits viral infection of plants (tobacco mosaic virus). Inhibits protein synthesis in both prokaryotes and eukaryotes. The sequence is that of Antiviral protein II/III (PAP2) from Phytolacca americana (American pokeweed).